Consider the following 337-residue polypeptide: MRVLGIETSCDETGIAIYDDEKGLLANQLYSQVKLHADYGGVVPELASRDHVRKTVPLIQAALKESGLTAKDIDAVAYTAGPGLVGALLVGATVGRSLAFAWDVPAIPVHHMEGHLLAPMLEDNPPEFPFVALLVSGGHTQLISVTGIGQYELLGESIDDAAGEAFDKTAKLLGLDYPGGPLLSKMAAQGTAGRFVFPRPMTDRPGLDFSFSGLKTFAANTIRDNGTDDQTRADIARAFEDAVVDTLMIKCKRALEQTGFKRLVMAGGVSANRTLRAKLAEMMKKRRGEVFYARPEFCTDNGAMIAYAGMVRFKAGATADLGVSVRPRWPLAELPAA.

2 residues coordinate Fe cation: His-111 and His-115. Substrate contacts are provided by residues 134-138 (LVSGG), Asp-167, Gly-180, and Asn-272. Position 300 (Asp-300) interacts with Fe cation.

It belongs to the KAE1 / TsaD family. It depends on Fe(2+) as a cofactor.

It localises to the cytoplasm. The catalysed reaction is L-threonylcarbamoyladenylate + adenosine(37) in tRNA = N(6)-L-threonylcarbamoyladenosine(37) in tRNA + AMP + H(+). Functionally, required for the formation of a threonylcarbamoyl group on adenosine at position 37 (t(6)A37) in tRNAs that read codons beginning with adenine. Is involved in the transfer of the threonylcarbamoyl moiety of threonylcarbamoyl-AMP (TC-AMP) to the N6 group of A37, together with TsaE and TsaB. TsaD likely plays a direct catalytic role in this reaction. In Escherichia coli O127:H6 (strain E2348/69 / EPEC), this protein is tRNA N6-adenosine threonylcarbamoyltransferase.